Reading from the N-terminus, the 704-residue chain is Myb-related protein B (704 aa).

HTH myb-type domains follow at residues 26–77 (RDNR…LRVL), 78–133 (NPDL…NPEV), and 134–184 (KKSC…KRKV). Residues 54–77 (WKFLASHFPNRTDQQCQYRWLRVL) constitute a DNA-binding region (H-T-H motif). Residue Lys104 forms a Glycyl lysine isopeptide (Lys-Gly) (interchain with G-Cter in SUMO2) linkage. 2 consecutive DNA-binding regions (H-T-H motif) follow at residues 106–129 (WTLIAKHLKGRLGKQCRERWHNHL) and 157–180 (WAEIAKMLPGRTDNAVKNHWNSTI). Lys197 is covalently cross-linked (Glycyl lysine isopeptide (Lys-Gly) (interchain with G-Cter in SUMO2)). Residue Thr267 is modified to Phosphothreonine. Lys275 participates in a covalent cross-link: Glycyl lysine isopeptide (Lys-Gly) (interchain with G-Cter in SUMO2). Ser282 is modified (phosphoserine). Residues 325–412 (LSKFDLPEEP…GSGIGTPPSV (88 aa)) form a disordered region. A compositionally biased stretch (low complexity) spans 339-366 (SVVSSPVQPQTSQQQQEEALQSSQQAAT). Ser396 carries the post-translational modification Phosphoserine. Lys414 participates in a covalent cross-link: Glycyl lysine isopeptide (Lys-Gly) (interchain with G-Cter in SUMO2). Phosphothreonine; by CDK2 is present on residues Thr443 and Thr447. Residues Lys450 and Lys485 each participate in a glycyl lysine isopeptide (Lys-Gly) (interchain with G-Cter in SUMO2) cross-link. A phosphothreonine; by CDK2 mark is found at Thr490 and Thr497. Residues Lys502 and Lys513 each participate in a glycyl lysine isopeptide (Lys-Gly) (interchain with G-Cter in SUMO2) cross-link. At Thr524 the chain carries Phosphothreonine; by CDK2. Glycyl lysine isopeptide (Lys-Gly) (interchain with G-Cter in SUMO2) cross-links involve residues Lys527, Lys537, and Lys550. Residue Ser581 is modified to Phosphoserine; by CDK2. Residues Lys588 and Lys600 each participate in a glycyl lysine isopeptide (Lys-Gly) (interchain with G-Cter in SUMO2) cross-link. The tract at residues 603 to 626 (SSTMPKPLSLPTSVTPSSCGFTSP) is disordered. Positions 607–620 (PKPLSLPTSVTPSS) are enriched in low complexity. Glycyl lysine isopeptide (Lys-Gly) (interchain with G-Cter in SUMO2) cross-links involve residues Lys629, Lys643, and Lys652.

Component of the DREAM complex (also named LINC complex) at least composed of E2F4, E2F5, LIN9, LIN37, LIN52, LIN54, MYBL1, MYBL2, RBL1, RBL2, RBBP4, TFDP1 and TFDP2. The complex exists in quiescent cells where it represses cell cycle-dependent genes. It dissociates in S phase when LIN9, LIN37, LIN52 and LIN54 form a subcomplex that binds to MYBL2. Interacts with CCNF (via the Cyclin N-terminal domain). Post-translationally, phosphorylated by cyclin A/CDK2 during S-phase. Phosphorylation at Thr-524 is probably involved in transcriptional activity.

It localises to the nucleus. In terms of biological role, transcription factor involved in the regulation of cell survival, proliferation, and differentiation. Transactivates the expression of the CLU gene. This is Myb-related protein B (Mybl2) from Mus musculus (Mouse).